The sequence spans 510 residues: NAD(P)H-quinone oxidoreductase subunit 2, chloroplastic (510 aa).

A run of 12 helical transmembrane segments spans residues Leu-24–Leu-44, Trp-59–Trp-79, Ile-99–Ile-119, Met-124–Cys-144, Phe-149–Tyr-169, Tyr-183–Gly-203, Ile-229–Phe-249, Trp-295–Ile-315, Met-323–Asp-343, Gly-347–Ala-367, Ala-395–Phe-415, and Leu-418–Leu-438.

It belongs to the complex I subunit 2 family. NDH is composed of at least 16 different subunits, 5 of which are encoded in the nucleus.

The protein resides in the plastid. It is found in the chloroplast thylakoid membrane. The enzyme catalyses a plastoquinone + NADH + (n+1) H(+)(in) = a plastoquinol + NAD(+) + n H(+)(out). The catalysed reaction is a plastoquinone + NADPH + (n+1) H(+)(in) = a plastoquinol + NADP(+) + n H(+)(out). NDH shuttles electrons from NAD(P)H:plastoquinone, via FMN and iron-sulfur (Fe-S) centers, to quinones in the photosynthetic chain and possibly in a chloroplast respiratory chain. The immediate electron acceptor for the enzyme in this species is believed to be plastoquinone. Couples the redox reaction to proton translocation, and thus conserves the redox energy in a proton gradient. The sequence is that of NAD(P)H-quinone oxidoreductase subunit 2, chloroplastic from Phormium tenax (New Zealand flax).